A 257-amino-acid chain; its full sequence is Large ribosomal subunit protein bL28m (257 aa).

The transit peptide at 1–55 (MPLHRYPVHLWQKLRLRQGICARLPAHFLRSLEEERTPTPVHYKPHGTKFKINPK) directs the protein to the mitochondrion.

It belongs to the bacterial ribosomal protein bL28 family. Component of the mitochondrial ribosome large subunit (39S) which comprises a 16S rRNA and about 50 distinct proteins. Interacts with OXA1L.

It localises to the mitochondrion. The polypeptide is Large ribosomal subunit protein bL28m (Mrpl28) (Mus musculus (Mouse)).